Reading from the N-terminus, the 598-residue chain is Membrane protein insertase YidC (598 aa).

The chain crosses the membrane as a helical span at residues 7–27 (NYFIAIALSVLIVLGWQFLYM). The disordered stretch occupies residues 37-76 (AQEAQKAQQQTEQVQQPAAGGQTPAQTSGAAPSGQAAATA). Positions 40-76 (AQKAQQQTEQVQQPAAGGQTPAQTSGAAPSGQAAATA) are enriched in low complexity. The next 4 helical transmembrane spans lie at 377–397 (FGVA…PLAS), 447–467 (WPVA…YITI), 492–512 (LFGL…WPLI), and 538–558 (WMPL…VIYW).

Belongs to the OXA1/ALB3/YidC family. Type 1 subfamily. Interacts with the Sec translocase complex via SecD. Specifically interacts with transmembrane segments of nascent integral membrane proteins during membrane integration.

It localises to the cell inner membrane. Its function is as follows. Required for the insertion and/or proper folding and/or complex formation of integral membrane proteins into the membrane. Involved in integration of membrane proteins that insert both dependently and independently of the Sec translocase complex, as well as at least some lipoproteins. Aids folding of multispanning membrane proteins. This chain is Membrane protein insertase YidC, found in Rhizobium johnstonii (strain DSM 114642 / LMG 32736 / 3841) (Rhizobium leguminosarum bv. viciae).